The following is a 363-amino-acid chain: Phosphoserine aminotransferase (363 aa).

Arg42 is a binding site for L-glutamate. Pyridoxal 5'-phosphate contacts are provided by residues 76–77 (GR), Trp102, Thr156, Asp175, and Gln198. Lys199 is modified (N6-(pyridoxal phosphate)lysine). Position 240-241 (240-241 (NT)) interacts with pyridoxal 5'-phosphate.

The protein belongs to the class-V pyridoxal-phosphate-dependent aminotransferase family. SerC subfamily. In terms of assembly, homodimer. The cofactor is pyridoxal 5'-phosphate.

The protein localises to the cytoplasm. The catalysed reaction is O-phospho-L-serine + 2-oxoglutarate = 3-phosphooxypyruvate + L-glutamate. It carries out the reaction 4-(phosphooxy)-L-threonine + 2-oxoglutarate = (R)-3-hydroxy-2-oxo-4-phosphooxybutanoate + L-glutamate. Its pathway is amino-acid biosynthesis; L-serine biosynthesis; L-serine from 3-phospho-D-glycerate: step 2/3. It participates in cofactor biosynthesis; pyridoxine 5'-phosphate biosynthesis; pyridoxine 5'-phosphate from D-erythrose 4-phosphate: step 3/5. Catalyzes the reversible conversion of 3-phosphohydroxypyruvate to phosphoserine and of 3-hydroxy-2-oxo-4-phosphonooxybutanoate to phosphohydroxythreonine. This Shewanella halifaxensis (strain HAW-EB4) protein is Phosphoserine aminotransferase.